The following is a 360-amino-acid chain: Phosphoserine aminotransferase (360 aa).

R41 contributes to the L-glutamate binding site. Pyridoxal 5'-phosphate is bound by residues W101, T152, D172, and Q195. At K196 the chain carries N6-(pyridoxal phosphate)lysine. 237-238 provides a ligand contact to pyridoxal 5'-phosphate; sequence NT.

It belongs to the class-V pyridoxal-phosphate-dependent aminotransferase family. SerC subfamily. In terms of assembly, homodimer. It depends on pyridoxal 5'-phosphate as a cofactor.

The protein resides in the cytoplasm. It carries out the reaction O-phospho-L-serine + 2-oxoglutarate = 3-phosphooxypyruvate + L-glutamate. The catalysed reaction is 4-(phosphooxy)-L-threonine + 2-oxoglutarate = (R)-3-hydroxy-2-oxo-4-phosphooxybutanoate + L-glutamate. It participates in amino-acid biosynthesis; L-serine biosynthesis; L-serine from 3-phospho-D-glycerate: step 2/3. The protein operates within cofactor biosynthesis; pyridoxine 5'-phosphate biosynthesis; pyridoxine 5'-phosphate from D-erythrose 4-phosphate: step 3/5. Functionally, catalyzes the reversible conversion of 3-phosphohydroxypyruvate to phosphoserine and of 3-hydroxy-2-oxo-4-phosphonooxybutanoate to phosphohydroxythreonine. The polypeptide is Phosphoserine aminotransferase (Paraburkholderia phymatum (strain DSM 17167 / CIP 108236 / LMG 21445 / STM815) (Burkholderia phymatum)).